We begin with the raw amino-acid sequence, 95 residues long: uncharacterized protein (95 aa).

This is an uncharacterized protein from Methanocaldococcus jannaschii (strain ATCC 43067 / DSM 2661 / JAL-1 / JCM 10045 / NBRC 100440) (Methanococcus jannaschii).